The following is a 345-amino-acid chain: Fructose-1,6-bisphosphatase class 1 (345 aa).

Glutamate 90, aspartate 109, leucine 111, and aspartate 112 together coordinate Mg(2+). Substrate is bound by residues 112–115 and asparagine 199; that span reads DGSS. Glutamate 271 serves as a coordination point for Mg(2+).

It belongs to the FBPase class 1 family. In terms of assembly, homotetramer. Mg(2+) is required as a cofactor.

It localises to the cytoplasm. It catalyses the reaction beta-D-fructose 1,6-bisphosphate + H2O = beta-D-fructose 6-phosphate + phosphate. It participates in carbohydrate biosynthesis; Calvin cycle. This Rhodopseudomonas palustris (strain BisB5) protein is Fructose-1,6-bisphosphatase class 1.